The sequence spans 155 residues: FAD synthase (155 aa).

ATP-binding positions include 9–10 (TF), 14–17 (HPGH), and aspartate 92.

It belongs to the archaeal FAD synthase family. As to quaternary structure, homodimer. Requires a divalent metal cation as cofactor.

It catalyses the reaction FMN + ATP + H(+) = FAD + diphosphate. It participates in cofactor biosynthesis; FAD biosynthesis; FAD from FMN: step 1/1. Catalyzes the transfer of the AMP portion of ATP to flavin mononucleotide (FMN) to produce flavin adenine dinucleotide (FAD) coenzyme. The protein is FAD synthase of Archaeoglobus profundus (strain DSM 5631 / JCM 9629 / NBRC 100127 / Av18).